Consider the following 508-residue polypeptide: Photosystem II CP47 reaction center protein (508 aa).

6 consecutive transmembrane segments (helical) span residues 21-36 (SVHIMHTALVAGWAGS), 101-115 (IVFSGLCFLAAIWHW), 140-156 (GIHLFLSGVACFGFGAF), 203-218 (IAAGTLGILAGLFHLS), 237-252 (VLSSSIAAVFFAAFVV), and 457-472 (SFALLFFFGHIWHGAR).

The protein belongs to the PsbB/PsbC family. PsbB subfamily. PSII is composed of 1 copy each of membrane proteins PsbA, PsbB, PsbC, PsbD, PsbE, PsbF, PsbH, PsbI, PsbJ, PsbK, PsbL, PsbM, PsbT, PsbX, PsbY, PsbZ, Psb30/Ycf12, at least 3 peripheral proteins of the oxygen-evolving complex and a large number of cofactors. It forms dimeric complexes. Binds multiple chlorophylls. PSII binds additional chlorophylls, carotenoids and specific lipids. is required as a cofactor.

It is found in the plastid. The protein localises to the chloroplast thylakoid membrane. In terms of biological role, one of the components of the core complex of photosystem II (PSII). It binds chlorophyll and helps catalyze the primary light-induced photochemical processes of PSII. PSII is a light-driven water:plastoquinone oxidoreductase, using light energy to abstract electrons from H(2)O, generating O(2) and a proton gradient subsequently used for ATP formation. In Aethionema cordifolium (Lebanon stonecress), this protein is Photosystem II CP47 reaction center protein.